Consider the following 83-residue polypeptide: Delta-conotoxin-like Ac6.2 (83 aa).

An N-terminal signal peptide occupies residues 1-22; sequence MKLTCVVIVAVLFLTAWTFVTA. The propeptide occupies 23–51; that stretch reads DDSRYGLKNLFPKARHEMKNPEASKLNKR. Cystine bridges form between C54/C69, C61/C73, and C68/C78. 2 positions are modified to 4-hydroxyproline: P57 and P65.

This sequence belongs to the conotoxin O1 superfamily. In terms of tissue distribution, expressed by the venom duct.

Its subcellular location is the secreted. Functionally, delta-conotoxins bind to site 6 of voltage-gated sodium channels (Nav) and inhibit the inactivation process. This is Delta-conotoxin-like Ac6.2 from Conus achatinus (Little frog cone).